Here is a 154-residue protein sequence, read N- to C-terminus: MKLKILWVGKTQEEWLRRGIDEYTGRIRRYTPLEIAEAREEKGAAAEAMRTRECERLEKLVPKNARLVLLDERGDQLTSPELAAFMGKCRDSAVPEMVFAIGGAYGFADSFRARADRVLALSRLTFTHQMVRVILLEQIYRAHTILNGEPYHHS.

S-adenosyl-L-methionine contacts are provided by residues Leu-70, Gly-102, and 121-126; that span reads LSRLTF.

It belongs to the RNA methyltransferase RlmH family. In terms of assembly, homodimer.

The protein localises to the cytoplasm. The catalysed reaction is pseudouridine(1915) in 23S rRNA + S-adenosyl-L-methionine = N(3)-methylpseudouridine(1915) in 23S rRNA + S-adenosyl-L-homocysteine + H(+). Its function is as follows. Specifically methylates the pseudouridine at position 1915 (m3Psi1915) in 23S rRNA. This chain is Ribosomal RNA large subunit methyltransferase H, found in Geobacter metallireducens (strain ATCC 53774 / DSM 7210 / GS-15).